The sequence spans 309 residues: MPLQLFGRDQIVVHYDNGNMSNDDQNHQSVLGSWTRRAAAALRTLMNKRIQRITLTHWLLLVIWVTSLWKFTSHYRQLYANSAVFATLCTNILLFGISDILAQSIACFYSYHVDPIPQILNDTFHHVQNNRDVENGGGYESDELSIFNDFTSEHSSYTDNDDYPELDRPLATFKTDTFDFFRWGCFMFWGFFISFFQAPWYKFLNFFYTEDPTVVQVFERVLSDQLLYSPISLYCFFMFSNYVMEGGDKDTLGKKIQRLYISTLGCNYLVWPMVQFINFLIMPRDFQAPFSSSVGVVWNCFLSMRNASK.

Over 1-52 (MPLQLFGRDQIVVHYDNGNMSNDDQNHQSVLGSWTRRAAAALRTLMNKRIQR) the chain is Vacuolar. Asparagine 19 is a glycosylation site (N-linked (GlcNAc...) asparagine). A helical transmembrane segment spans residues 53-73 (ITLTHWLLLVIWVTSLWKFTS). Residues 74-81 (HYRQLYAN) are Cytoplasmic-facing. Residues 82–102 (SAVFATLCTNILLFGISDILA) form a helical membrane-spanning segment. Residues 103-183 (QSIACFYSYH…KTDTFDFFRW (81 aa)) are Vacuolar-facing. The N-linked (GlcNAc...) asparagine glycan is linked to asparagine 121. The chain crosses the membrane as a helical span at residues 184-204 (GCFMFWGFFISFFQAPWYKFL). Residues 205–225 (NFFYTEDPTVVQVFERVLSDQ) lie on the Cytoplasmic side of the membrane. The helical transmembrane segment at 226 to 246 (LLYSPISLYCFFMFSNYVMEG) threads the bilayer. Over 247-260 (GDKDTLGKKIQRLY) the chain is Vacuolar. The chain crosses the membrane as a helical span at residues 261-281 (ISTLGCNYLVWPMVQFINFLI). The Cytoplasmic portion of the chain corresponds to 282–309 (MPRDFQAPFSSSVGVVWNCFLSMRNASK).

This sequence belongs to the peroxisomal membrane protein PXMP2/4 family. N-glycosylated.

The protein resides in the vacuole membrane. This chain is Vacuolar membrane protein YOR292C, found in Saccharomyces cerevisiae (strain ATCC 204508 / S288c) (Baker's yeast).